Here is a 109-residue protein sequence, read N- to C-terminus: Large ribosomal subunit protein uL22 (109 aa).

The protein belongs to the universal ribosomal protein uL22 family. As to quaternary structure, part of the 50S ribosomal subunit.

In terms of biological role, this protein binds specifically to 23S rRNA; its binding is stimulated by other ribosomal proteins, e.g. L4, L17, and L20. It is important during the early stages of 50S assembly. It makes multiple contacts with different domains of the 23S rRNA in the assembled 50S subunit and ribosome. The globular domain of the protein is located near the polypeptide exit tunnel on the outside of the subunit, while an extended beta-hairpin is found that lines the wall of the exit tunnel in the center of the 70S ribosome. This Dehalococcoides mccartyi (strain ATCC BAA-2100 / JCM 16839 / KCTC 5957 / BAV1) protein is Large ribosomal subunit protein uL22.